A 225-amino-acid polypeptide reads, in one-letter code: Cell division protein SepF (225 aa).

Positions 22-116 (EYLDEPEPAR…TRGALAVDTR (95 aa)) are disordered. 2 stretches are compositionally biased toward basic and acidic residues: residues 28–54 (EPARRPARPARDSGRDPYLDRDDRDFA) and 77–86 (RYDGPRHSSR).

This sequence belongs to the SepF family. Homodimer. Interacts with FtsZ.

It is found in the cytoplasm. Cell division protein that is part of the divisome complex and is recruited early to the Z-ring. Probably stimulates Z-ring formation, perhaps through the cross-linking of FtsZ protofilaments. Its function overlaps with FtsA. In Rhodococcus jostii (strain RHA1), this protein is Cell division protein SepF.